Consider the following 61-residue polypeptide: Short neurotoxin 1 (61 aa).

Residues 1–16 (MECHNQQSSQPPTTKT) show a composition bias toward polar residues. Residues 1-20 (MECHNQQSSQPPTTKTCPGE) are disordered. Intrachain disulfides connect Cys3/Cys23, Cys17/Cys40, Cys42/Cys53, and Cys54/Cys59.

It belongs to the three-finger toxin family. Short-chain subfamily. Type I alpha-neurotoxin sub-subfamily. As to expression, expressed by the venom gland.

It is found in the secreted. Its function is as follows. Binds to muscle nicotinic acetylcholine receptor (nAChR) and inhibit acetylcholine from binding to the receptor, thereby impairing neuromuscular transmission. The chain is Short neurotoxin 1 from Naja melanoleuca (Forest cobra).